We begin with the raw amino-acid sequence, 145 residues long: 3-dehydroquinate dehydratase (145 aa).

Y22 (proton acceptor) is an active-site residue. 3 residues coordinate substrate: N71, H77, and D84. H97 serves as the catalytic Proton donor. Substrate is bound by residues I98–S99 and R108.

This sequence belongs to the type-II 3-dehydroquinase family. In terms of assembly, homododecamer.

It carries out the reaction 3-dehydroquinate = 3-dehydroshikimate + H2O. Its pathway is metabolic intermediate biosynthesis; chorismate biosynthesis; chorismate from D-erythrose 4-phosphate and phosphoenolpyruvate: step 3/7. Its function is as follows. Catalyzes a trans-dehydration via an enolate intermediate. This is 3-dehydroquinate dehydratase from Thermotoga neapolitana (strain ATCC 49049 / DSM 4359 / NBRC 107923 / NS-E).